The sequence spans 103 residues: Large ribosomal subunit protein uL24 (103 aa).

The protein belongs to the universal ribosomal protein uL24 family. As to quaternary structure, part of the 50S ribosomal subunit.

Functionally, one of two assembly initiator proteins, it binds directly to the 5'-end of the 23S rRNA, where it nucleates assembly of the 50S subunit. One of the proteins that surrounds the polypeptide exit tunnel on the outside of the subunit. This Bacillus mycoides (strain KBAB4) (Bacillus weihenstephanensis) protein is Large ribosomal subunit protein uL24.